Reading from the N-terminus, the 66-residue chain is MKADEVRGLSADQLKDKLADLKKEQFNLRFQKATGQLEKSSRINEVRKDIARVKTIARQKAAEAKA.

Belongs to the universal ribosomal protein uL29 family.

In Agrobacterium fabrum (strain C58 / ATCC 33970) (Agrobacterium tumefaciens (strain C58)), this protein is Large ribosomal subunit protein uL29.